A 445-amino-acid polypeptide reads, in one-letter code: MIMMTRFAPSPTGYLHVGNVRTALICWLYTRSKQGRFLLRFDDTDLQRSKDDYRNEIANDLKWLQMDWDFDVRQSSRFDRYDEIFNYLLKEELIYPCYESKEELDFKRKMQLKLGLPPIYDRSALKLTQDEKNKYSEQDVYFRFKIDQSQLISWDDEIRGKVSFNAANISDPIVKRADGTYTYMLPSVIDDIDFDITHIVRGEDHISNTAIQIQMFNALRASVPTFSHLSLLYCDDNKISKRVGGFSIKDMQFYELEPMAINSYFAKIGTSDPIVVHTKIQDLIYNFDITKFNQAPTQFNIDDVIKLNPKVLHKMSFSDVKHRLSELNITSPDLWDFVSGNVQKFSDIQEWIKICGQSTVPVINESDQDFIKMALSVFPNGEINQDTWKTWVANIKEKTDRKSKDIFIPLRLALTGISTGPELAKLLPILGRAEIIRRLGYSSRC.

Positions 9–19 (PSPTGYLHVGN) match the 'HIGH' region motif. The 'KMSKS' region signature appears at 238 to 242 (KISKR). Lys241 contacts ATP.

Belongs to the class-I aminoacyl-tRNA synthetase family. Glutamate--tRNA ligase type 1 subfamily. In terms of assembly, monomer.

The protein resides in the cytoplasm. The catalysed reaction is tRNA(Glu) + L-glutamate + ATP = L-glutamyl-tRNA(Glu) + AMP + diphosphate. Functionally, catalyzes the attachment of glutamate to tRNA(Glu) in a two-step reaction: glutamate is first activated by ATP to form Glu-AMP and then transferred to the acceptor end of tRNA(Glu). This chain is Glutamate--tRNA ligase 1, found in Ehrlichia ruminantium (strain Gardel).